The primary structure comprises 193 residues: CDP-diacylglycerol--glycerol-3-phosphate 3-phosphatidyltransferase (193 aa).

The next 4 membrane-spanning stretches (helical) occupy residues 8–28, 39–59, 88–108, and 157–177; these read ITLA…APFD, IPVA…TDWV, AALI…IVII, and LVSF…TVVS.

Belongs to the CDP-alcohol phosphatidyltransferase class-I family.

The protein resides in the cell membrane. The catalysed reaction is a CDP-1,2-diacyl-sn-glycerol + sn-glycerol 3-phosphate = a 1,2-diacyl-sn-glycero-3-phospho-(1'-sn-glycero-3'-phosphate) + CMP + H(+). It functions in the pathway phospholipid metabolism; phosphatidylglycerol biosynthesis; phosphatidylglycerol from CDP-diacylglycerol: step 1/2. This protein catalyzes the committed step to the synthesis of the acidic phospholipids. The chain is CDP-diacylglycerol--glycerol-3-phosphate 3-phosphatidyltransferase (pgsA) from Bacillus subtilis (strain 168).